The primary structure comprises 130 residues: Organ-specific protein P4 (130 aa).

2 repeat units span residues 60-85 (HAKE…DNEI) and 86-111 (HANE…DNEI). Residues 60–111 (HAKENKGAIGEFEPCPNASAYGDNEIHANENKGAIGEFETRPNGSAYGDNEI) form a 2 X 26 AA tandem repeats region. Positions 79-130 (AYGDNEIHANENKGAIGEFETRPNGSAYGDNEIGAEFTDDFEPRPSMTKYNA) are disordered.

The protein to organ specific protein S2. As to expression, expressed in pods.

The polypeptide is Organ-specific protein P4 (Pisum sativum (Garden pea)).